A 224-amino-acid chain; its full sequence is MLPQGLIVSCQALPDEPLHSSFIMSKLALAAYEGGAVGIRANTKEDIEAIKTEVPLPVIGIVKRDYEGSDVFITATSKEVDELIESGCEVIALDATKQKRPKETLEELVTYIRKHAPNVEIMADISTVEEAVNADKLGFDYVGTTLRGYTSYTKGHILFEDDFAFLKEVLDKVNAKVIAEGNVITPEMYQTVSNLGVYCTVVGGAITRPKQITERFVQAAKDQS.

It belongs to the NanE family.

The enzyme catalyses an N-acyl-D-glucosamine 6-phosphate = an N-acyl-D-mannosamine 6-phosphate. It participates in amino-sugar metabolism; N-acetylneuraminate degradation; D-fructose 6-phosphate from N-acetylneuraminate: step 3/5. Converts N-acetylmannosamine-6-phosphate (ManNAc-6-P) to N-acetylglucosamine-6-phosphate (GlcNAc-6-P). This chain is Putative N-acetylmannosamine-6-phosphate 2-epimerase, found in Staphylococcus carnosus (strain TM300).